Consider the following 38-residue polypeptide: Photosystem II reaction center protein L (38 aa).

A helical transmembrane segment spans residues Ser17 to Phe37.

This sequence belongs to the PsbL family. PSII is composed of 1 copy each of membrane proteins PsbA, PsbB, PsbC, PsbD, PsbE, PsbF, PsbH, PsbI, PsbJ, PsbK, PsbL, PsbM, PsbT, PsbX, PsbY, PsbZ, Psb30/Ycf12, at least 3 peripheral proteins of the oxygen-evolving complex and a large number of cofactors. It forms dimeric complexes.

It localises to the plastid. It is found in the chloroplast thylakoid membrane. Its function is as follows. One of the components of the core complex of photosystem II (PSII). PSII is a light-driven water:plastoquinone oxidoreductase that uses light energy to abstract electrons from H(2)O, generating O(2) and a proton gradient subsequently used for ATP formation. It consists of a core antenna complex that captures photons, and an electron transfer chain that converts photonic excitation into a charge separation. This subunit is found at the monomer-monomer interface and is required for correct PSII assembly and/or dimerization. The sequence is that of Photosystem II reaction center protein L from Allium textile (Textile onion).